A 525-amino-acid chain; its full sequence is Vesicular inhibitory amino acid transporter (525 aa).

The Cytoplasmic portion of the chain corresponds to 1-132 (MATLLRSKLS…WNVTNAIQGM (132 aa)). Residues 83–107 (IHYQRGSGAPLPPSGSKDQVGGGGE) form a disordered region. A helical membrane pass occupies residues 133–153 (FVLGLPYAILHGGYLGLFLII). Topologically, residues 154-204 (FAAVVCCYTGKILIACLYEENEDGEVVRVRDSYVAIANACCAPRFPTLGGR) are lumenal, vesicle. Tyrosine 186 carries the 3'-nitrotyrosine modification. The helical transmembrane segment at 205-225 (VVNVAQIIELVMTCILYVVVS) threads the bilayer. The Cytoplasmic portion of the chain corresponds to 226-265 (GNLMYNSFPGLPVSQKSWSIIATAVLLPCAFLKNLKAVSK). A helical transmembrane segment spans residues 266–286 (FSLLCTLAHFVINILVIAYCL). At 287 to 305 (SRARDWAWEKVKFYIDVKK) the chain is on the lumenal, vesicle side. A helical membrane pass occupies residues 306–326 (FPISIGIIVFSYTSQIFLPSL). Residues 327 to 341 (EGNMQQPSEFHCMMN) lie on the Cytoplasmic side of the membrane. A helical membrane pass occupies residues 342–362 (WTHIAACVLKGLFALVAYLTW). The Lumenal, vesicle portion of the chain corresponds to 363–383 (ADETKEVITDNLPGSIRAVVN). Residues 384–404 (IFLVAKALLSYPLPFFAAVEV) traverse the membrane as a helical segment. Topologically, residues 405 to 438 (LEKSLFQEGSRAFFPACYSGDGRLKSWGLTLRCA) are cytoplasmic. Residues 439-459 (LVVFTLLMAIYVPHFALLMGL) form a helical membrane-spanning segment. Over 460 to 461 (TG) the chain is Lumenal, vesicle. A helical membrane pass occupies residues 462-482 (SLTGAGLCFLLPSLFHLRLLW). Residues 483–489 (RKLLWHQ) lie on the Cytoplasmic side of the membrane. A helical membrane pass occupies residues 490-510 (VFFDVAIFVIGGICSVSGFVH). Residues 511–525 (SLEGLIEAYRTNAED) are Lumenal, vesicle-facing.

The protein belongs to the amino acid/polyamine transporter 2 family. In terms of tissue distribution, retina. Expressed throughout the horizontal cells or more specifically at the terminals.

It localises to the cytoplasmic vesicle membrane. Its subcellular location is the presynapse. It catalyses the reaction 4-aminobutanoate(out) + n H(+)(in) = 4-aminobutanoate(in) + n H(+)(out). The catalysed reaction is glycine(out) + n H(+)(in) = glycine(in) + n H(+)(out). The enzyme catalyses beta-alanine(out) + n H(+)(in) = beta-alanine(in) + n H(+)(out). In terms of biological role, antiporter that exchanges vesicular protons for cytosolic 4-aminobutanoate or to a lesser extend glycine, thus allowing their secretion from nerve terminals. The transport is equally dependent on the chemical and electrical components of the proton gradient. May also transport beta-alanine. Acidification of GABAergic synaptic vesicles is a prerequisite for 4-aminobutanoate uptake. The polypeptide is Vesicular inhibitory amino acid transporter (Homo sapiens (Human)).